A 186-amino-acid polypeptide reads, in one-letter code: Putative manganese efflux pump MntP (186 aa).

Helical transmembrane passes span 1 to 21 (MSFL…FAVS), 41 to 61 (VFFG…GSAV), 62 to 82 (SGFV…FIGG), 105 to 127 (LFLL…AFLG), 139 to 159 (CVTF…GHFF), and 163 to 183 (VEIL…AEHM).

The protein belongs to the MntP (TC 9.B.29) family.

The protein resides in the cell membrane. Its function is as follows. Probably functions as a manganese efflux pump. This Methanosarcina mazei (strain ATCC BAA-159 / DSM 3647 / Goe1 / Go1 / JCM 11833 / OCM 88) (Methanosarcina frisia) protein is Putative manganese efflux pump MntP.